Consider the following 228-residue polypeptide: LexA repressor (228 aa).

Residues 26-46 constitute a DNA-binding region (H-T-H motif); the sequence is FDEMKDALDLRSKSGIHRLIT. Catalysis depends on for autocatalytic cleavage activity residues S149 and K187.

The protein belongs to the peptidase S24 family. Homodimer.

The catalysed reaction is Hydrolysis of Ala-|-Gly bond in repressor LexA.. Its function is as follows. Represses a number of genes involved in the response to DNA damage (SOS response), including recA and lexA. Has been shown to bind to the direct repeat sequence 5'-GTT-N(7)-GTTC-3'. In the presence of single-stranded DNA, RecA interacts with LexA causing an autocatalytic cleavage which disrupts the DNA-binding part of LexA, leading to derepression of the SOS regulon and eventually DNA repair. The chain is LexA repressor from Cereibacter sphaeroides (strain ATCC 17023 / DSM 158 / JCM 6121 / CCUG 31486 / LMG 2827 / NBRC 12203 / NCIMB 8253 / ATH 2.4.1.) (Rhodobacter sphaeroides).